The chain runs to 138 residues: Large ribosomal subunit protein uL16 (138 aa).

The disordered stretch occupies residues 1–29; sequence MSLLQPRKVKWRKPQKGRTKGKATRRNQV. Basic residues predominate over residues 7–25; sequence RKVKWRKPQKGRTKGKATR.

It belongs to the universal ribosomal protein uL16 family. As to quaternary structure, part of the 50S ribosomal subunit.

Binds 23S rRNA and is also seen to make contacts with the A and possibly P site tRNAs. The sequence is that of Large ribosomal subunit protein uL16 from Sulfurihydrogenibium sp. (strain YO3AOP1).